Here is a 275-residue protein sequence, read N- to C-terminus: Methylthioribulose-1-phosphate dehydratase (275 aa).

C125 contacts substrate. Zn(2+)-binding residues include H143 and H145. E168 serves as the catalytic Proton donor/acceptor. H233 is a binding site for Zn(2+).

This sequence belongs to the aldolase class II family. MtnB subfamily. It depends on Zn(2+) as a cofactor.

It localises to the cytoplasm. The catalysed reaction is 5-(methylsulfanyl)-D-ribulose 1-phosphate = 5-methylsulfanyl-2,3-dioxopentyl phosphate + H2O. It functions in the pathway amino-acid biosynthesis; L-methionine biosynthesis via salvage pathway; L-methionine from S-methyl-5-thio-alpha-D-ribose 1-phosphate: step 2/6. Catalyzes the dehydration of methylthioribulose-1-phosphate (MTRu-1-P) into 2,3-diketo-5-methylthiopentyl-1-phosphate (DK-MTP-1-P). The protein is Methylthioribulose-1-phosphate dehydratase of Lodderomyces elongisporus (strain ATCC 11503 / CBS 2605 / JCM 1781 / NBRC 1676 / NRRL YB-4239) (Yeast).